The primary structure comprises 687 residues: Variant-specific surface protein VSP4A1 (687 aa).

An N-terminal signal peptide occupies residues 1–14 (MLLTAFYVVLGSFA). The Extracellular segment spans residues 15 to 660 (APCQQDGDHI…SGLSTGAIAG (646 aa)). Residues 661–681 (ISVAAIVVVGGLVGFLCWWFI) form a helical membrane-spanning segment. Over 682–687 (CRGKAQ) the chain is Cytoplasmic.

Belongs to the Giardia variant surface protein family. O-glycosylated. The major glycan is a trisaccharide with Glc at the reducing terminus. Post-translationally, palmitoylated.

Its subcellular location is the cell membrane. The polypeptide is Variant-specific surface protein VSP4A1 (Giardia intestinalis (Giardia lamblia)).